The primary structure comprises 173 residues: MARVEL domain-containing protein 1 (173 aa).

An N-acetylmethionine modification is found at Met-1. The Cytoplasmic segment spans residues 1 to 29; that stretch reads MLPPPPRQPPPQARAARGAVRLQRPFLRS. The MARVEL domain maps to 26–166; it reads FLRSPLGVLR…SALYGCGRRC (141 aa). The helical transmembrane segment at 30–50 threads the bilayer; sequence PLGVLRLLQLLAGAAFWITIA. The Extracellular portion of the chain corresponds to 51–59; sequence TSKYQGPVH. Residues 60–80 form a helical membrane-spanning segment; the sequence is FALFVSVLFWLLTLGLYFLTL. Residues 81–94 are Cytoplasmic-facing; the sequence is LGKHELVPVLGSRW. The helical transmembrane segment at 95–115 threads the bilayer; it reads LMVNVAHDVLAAALYGAATGI. At 116-138 the chain is on the extracellular side; it reads MSDQMQRHSYCNLKDYPLPCAYH. The chain crosses the membrane as a helical span at residues 139 to 159; that stretch reads AFLAAAVCGGVCHGLYLLSAL. Topologically, residues 160–173 are cytoplasmic; the sequence is YGCGRRCQGKQEVA.

Widely expressed in normal tissues. Down-regulated in multiple primary tumors.

It is found in the cell membrane. It localises to the cytoplasm. Its subcellular location is the cytoskeleton. The protein localises to the nucleus. In terms of biological role, microtubule-associated protein that exhibits cell cycle-dependent localization and can inhibit cell proliferation and migration. This is MARVEL domain-containing protein 1 (MARVELD1) from Homo sapiens (Human).